We begin with the raw amino-acid sequence, 364 residues long: DNA replication and repair protein RecF (364 aa).

30-37 lines the ATP pocket; the sequence is GNNAQGKT.

It belongs to the RecF family.

The protein localises to the cytoplasm. Functionally, the RecF protein is involved in DNA metabolism; it is required for DNA replication and normal SOS inducibility. RecF binds preferentially to single-stranded, linear DNA. It also seems to bind ATP. The chain is DNA replication and repair protein RecF from Clostridium botulinum (strain Loch Maree / Type A3).